The chain runs to 211 residues: Pyridoxine/pyridoxamine 5'-phosphate oxidase (211 aa).

Residues 8 to 11 (RKNY) and Lys66 each bind substrate. FMN is bound by residues 61-66 (RIVLLK), 76-77 (FT), Lys83, and Gln105. Substrate-binding residues include Tyr123, Arg127, and Ser131. FMN contacts are provided by residues 140-141 (QS) and Trp184. Substrate is bound at residue 190–192 (RLH). Position 194 (Arg194) interacts with FMN.

This sequence belongs to the pyridoxamine 5'-phosphate oxidase family. As to quaternary structure, homodimer. It depends on FMN as a cofactor.

The catalysed reaction is pyridoxamine 5'-phosphate + O2 + H2O = pyridoxal 5'-phosphate + H2O2 + NH4(+). It carries out the reaction pyridoxine 5'-phosphate + O2 = pyridoxal 5'-phosphate + H2O2. It participates in cofactor metabolism; pyridoxal 5'-phosphate salvage; pyridoxal 5'-phosphate from pyridoxamine 5'-phosphate: step 1/1. Its pathway is cofactor metabolism; pyridoxal 5'-phosphate salvage; pyridoxal 5'-phosphate from pyridoxine 5'-phosphate: step 1/1. In terms of biological role, catalyzes the oxidation of either pyridoxine 5'-phosphate (PNP) or pyridoxamine 5'-phosphate (PMP) into pyridoxal 5'-phosphate (PLP). This is Pyridoxine/pyridoxamine 5'-phosphate oxidase from Polynucleobacter asymbioticus (strain DSM 18221 / CIP 109841 / QLW-P1DMWA-1) (Polynucleobacter necessarius subsp. asymbioticus).